Here is a 315-residue protein sequence, read N- to C-terminus: L-threo-3-deoxy-hexylosonate aldolase (315 aa).

Substrate is bound at residue 50-51 (SN). Lysine 174 acts as the Schiff-base intermediate with substrate in catalysis.

It belongs to the DapA family.

The catalysed reaction is 2-dehydro-3-deoxy-L-galactonate = L-glyceraldehyde + pyruvate. It participates in carbohydrate acid metabolism. Mediates the conversion of 2-dehydro-3-deoxy-L-galactonate to pyruvate and L-glyceraldehyde in D-galacturonate catabolic process. The polypeptide is L-threo-3-deoxy-hexylosonate aldolase (lga1) (Hypocrea jecorina (Trichoderma reesei)).